A 339-amino-acid polypeptide reads, in one-letter code: Dihydroorotate dehydrogenase (quinone) (339 aa).

Residues 62-66 (AGMDK) and Thr-86 each bind FMN. A substrate-binding site is contributed by Lys-66. A substrate-binding site is contributed by 111–115 (NRMGF). FMN is bound by residues Asn-139 and Asn-172. Residue Asn-172 participates in substrate binding. The active-site Nucleophile is Ser-175. Asn-177 provides a ligand contact to substrate. Lys-217 and Thr-245 together coordinate FMN. 246–247 (NT) contacts substrate. Residues Gly-268, Gly-297, and 318–319 (YS) each bind FMN.

It belongs to the dihydroorotate dehydrogenase family. Type 2 subfamily. Monomer. It depends on FMN as a cofactor.

It is found in the cell membrane. The enzyme catalyses (S)-dihydroorotate + a quinone = orotate + a quinol. The protein operates within pyrimidine metabolism; UMP biosynthesis via de novo pathway; orotate from (S)-dihydroorotate (quinone route): step 1/1. In terms of biological role, catalyzes the conversion of dihydroorotate to orotate with quinone as electron acceptor. The protein is Dihydroorotate dehydrogenase (quinone) of Shewanella baltica (strain OS185).